The following is a 446-amino-acid chain: NAD(P)H sulfur oxidoreductase (CoA-dependent) (446 aa).

Residue 17-18 (AA) coordinates FAD. Arg-28 provides a ligand contact to CoA. FAD contacts are provided by residues 39–40 (EA) and 46–48 (HAP). CoA contacts are provided by residues 45–49 (SHAPC), 66–67 (HY), and Arg-76. Cys-49 acts as the Redox-active in catalysis. Residues Val-86, Asp-284, and Ala-302 each coordinate FAD. Residues Asn-306 and Lys-362 each contribute to the CoA site. Tyr-426 contacts FAD. Positions 434 and 442 each coordinate CoA.

The protein belongs to the class-III pyridine nucleotide-disulfide oxidoreductase family. Requires FAD as cofactor.

It carries out the reaction hydrogen sulfide + NADP(+) = sulfur + NADPH. The catalysed reaction is hydrogen sulfide + NAD(+) = sulfur + NADH. In terms of biological role, catalyzes the CoA-dependent reduction of elemental sulfur (S(0)) to produce hydrogen sulfide. In Pyrococcus abyssi (strain GE5 / Orsay), this protein is NAD(P)H sulfur oxidoreductase (CoA-dependent).